The following is a 222-amino-acid chain: Cysteine protease inhibitor 9 (222 aa).

The N-terminal stretch at 1–26 (MKSINILSFLLLSSTLSLVAFARSFS) is a signal peptide. Residues 27–42 (SENPIVLPSTCHDDDN) constitute a propeptide that is removed on maturation. The Vacuolar targeting signal motif lies at 29–34 (NPIVLP). Cystine bridges form between Cys84–Cys136 and Cys185–Cys191.

It belongs to the protease inhibitor I3 (leguminous Kunitz-type inhibitor) family. Tuber.

It is found in the vacuole. Its function is as follows. Putative inhibitor of cysteine proteases. Does not inhibit papain. May protect the plant by inhibiting proteases of invading organisms. The chain is Cysteine protease inhibitor 9 from Solanum tuberosum (Potato).